Here is a 285-residue protein sequence, read N- to C-terminus: MSELTEAEKRRLLRERRQKKFSNGGASSRLNKITGQASSHLNAESPLDAPSAAKATPPASVHSATPDIKEDSNVAPQLDLLKQLAAMQGQGTGKSTPQDSSTPDLLSLLSSMNTGMPSAEGTPSFGQAAPAAPINQAALDYHDYLLNRLKAWTILVKWVFFLLPYLYLITRPNSSVWPAYAFTQSAWFAPLRNPSNFTRIFATFEFLSISIYYQLLKNVEHKSKIKNLQDTNKLVKLVSLVPEGVIPVANLKGKLITLLQYWDLLSMLITDISFVLIVLGLLTYL.

Over residues 1–10 (MSELTEAEKR) the composition is skewed to basic and acidic residues. Residues 1–71 (MSELTEAEKR…HSATPDIKED (71 aa)) form a disordered region. S2 is modified (N-acetylserine). Residues 2-148 (SELTEAEKRR…LDYHDYLLNR (147 aa)) lie on the Cytoplasmic side of the membrane. Over residues 11 to 20 (RLLRERRQKK) the composition is skewed to basic residues. Over residues 24 to 42 (GGASSRLNKITGQASSHLN) the composition is skewed to polar residues. At S45 the chain carries Phosphoserine. Residues 49–60 (APSAAKATPPAS) are compositionally biased toward low complexity. A helical membrane pass occupies residues 149–169 (LKAWTILVKWVFFLLPYLYLI). Over 170–196 (TRPNSSVWPAYAFTQSAWFAPLRNPSN) the chain is Lumenal. Residues N173 and N196 are each glycosylated (N-linked (GlcNAc...) asparagine). Residues 197 to 216 (FTRIFATFEFLSISIYYQLL) traverse the membrane as a helical segment. The Cytoplasmic segment spans residues 217-263 (KNVEHKSKIKNLQDTNKLVKLVSLVPEGVIPVANLKGKLITLLQYWD). A helical transmembrane segment spans residues 264–284 (LLSMLITDISFVLIVLGLLTY). Residue L285 is a topological domain, lumenal.

The protein belongs to the GET2 family. Component of the Golgi to ER traffic (GET) complex, which is composed of GET1, GET2 and GET3. Within the complex, GET1 and GET2 form a heterotetramer which is stabilized by phosphatidylinositol binding and which binds to the GET3 homodimer.

The protein resides in the endoplasmic reticulum membrane. It localises to the golgi apparatus membrane. Functionally, required for the post-translational delivery of tail-anchored (TA) proteins to the endoplasmic reticulum. Together with GET1, acts as a membrane receptor for soluble GET3, which recognizes and selectively binds the transmembrane domain of TA proteins in the cytosol. The GET complex cooperates with the HDEL receptor ERD2 to mediate the ATP-dependent retrieval of resident ER proteins that contain a C-terminal H-D-E-L retention signal from the Golgi to the ER. Involved in DNA replication and DNA damage response and also in cell wall function. This chain is Golgi to ER traffic protein 2, found in Saccharomyces cerevisiae (strain YJM789) (Baker's yeast).